We begin with the raw amino-acid sequence, 413 residues long: MRSRAARKFSTTPGTRDVLPPESTRLLDVQRRVLGRFRLHGFREVITPALEYAEVVEEARLRDSAFKLFDPDNQMLLLRPEMTTPIARLVSQRLRNAPPPFKLSYSLPVYRRSEVGRGQSAEFHQAGVEVVGSASPGEDAGTIALLVEALEAAGLGPGEDFMVVLGQAAFYRGFLERSCPEVAPALLSALAGKDLVRVEELSRRLPDAVAAGARGIPRLVGPASDGAVLEEAERYASGGGGAALENLRAILELLGAHGRLEAVMLDLGLIGRHDYYTGAVYEVYAAGLGFTVANGGRYDNLLRRFGEPLPATGFAISLERLVSVLPPERPAPLLVLVGEDAEAVRAARALRGEGVPVLHVSGGLAPEEAERYARSVDARWVGYPAPGGVKLREVGEGGFWLLAVEEAARRVLG.

The interval 1-21 is disordered; it reads MRSRAARKFSTTPGTRDVLPP.

It belongs to the class-II aminoacyl-tRNA synthetase family. HisZ subfamily. Heteromultimer composed of HisG and HisZ subunits.

It localises to the cytoplasm. The protein operates within amino-acid biosynthesis; L-histidine biosynthesis; L-histidine from 5-phospho-alpha-D-ribose 1-diphosphate: step 1/9. In terms of biological role, required for the first step of histidine biosynthesis. May allow the feedback regulation of ATP phosphoribosyltransferase activity by histidine. This Rubrobacter xylanophilus (strain DSM 9941 / JCM 11954 / NBRC 16129 / PRD-1) protein is ATP phosphoribosyltransferase regulatory subunit.